A 371-amino-acid chain; its full sequence is MPANFTEGSFDSNGTGQMLDSSPVACTETVTFTEVVEGKEWGSFYYSFKTEQLITLWVLFVFTIVGNSVVLFSTWRRKRKSRMTFFVTQLAITDSFTGLVNILTDIIWRFTGDFMAPDLVCRVVRYLQVVLLYASTYVLVSLSIDRYHAIVYPMKFLQGEKQAKVLIVIAWSLSFLFSIPTLIIFGKRTLSNGEVQCWALWPDDSYWTPYMTIVAFLVYFIPLTIISVMYGIVIRTIWIKSKTYETVISNCSDGKLCSSYNRGLISKAKIKAIKYSIVIILAFICCWSPYFLFDILDNFNLLPDTQERFYASVIIQNLPALNSAINPLIYCVFSSSISFPCGERRSQDSIMTFRERTERHEMQILSKPEFI.

The Extracellular portion of the chain corresponds to 1 to 52 (MPANFTEGSFDSNGTGQMLDSSPVACTETVTFTEVVEGKEWGSFYYSFKTEQ). Asn-4 and Asn-13 each carry an N-linked (GlcNAc...) asparagine glycan. The helical transmembrane segment at 53-73 (LITLWVLFVFTIVGNSVVLFS) threads the bilayer. At 74–82 (TWRRKRKSR) the chain is on the cytoplasmic side. A helical transmembrane segment spans residues 83–103 (MTFFVTQLAITDSFTGLVNIL). The Extracellular segment spans residues 104–123 (TDIIWRFTGDFMAPDLVCRV). A disulfide bridge links Cys-121 with Cys-197. A helical membrane pass occupies residues 124 to 144 (VRYLQVVLLYASTYVLVSLSI). The Cytoplasmic segment spans residues 145-164 (DRYHAIVYPMKFLQGEKQAK). Residues 165-185 (VLIVIAWSLSFLFSIPTLIIF) form a helical membrane-spanning segment. The Extracellular segment spans residues 186–212 (GKRTLSNGEVQCWALWPDDSYWTPYMT). A helical membrane pass occupies residues 213–233 (IVAFLVYFIPLTIISVMYGIV). Residues 234–275 (IRTIWIKSKTYETVISNCSDGKLCSSYNRGLISKAKIKAIKY) are Cytoplasmic-facing. The helical transmembrane segment at 276–296 (SIVIILAFICCWSPYFLFDIL) threads the bilayer. Residues 297-312 (DNFNLLPDTQERFYAS) are Extracellular-facing. A helical membrane pass occupies residues 313 to 333 (VIIQNLPALNSAINPLIYCVF). Over 334-371 (SSSISFPCGERRSQDSIMTFRERTERHEMQILSKPEFI) the chain is Cytoplasmic.

Belongs to the G-protein coupled receptor 1 family. Vasopressin/oxytocin receptor subfamily.

The protein localises to the cell membrane. Functionally, G-protein coupled receptor for neuropeptide S (NPS). Promotes mobilization of intracellular Ca(2+) stores. Inhibits cell growth in response to NPS binding. Involved in pathogenesis of asthma and other IgE-mediated diseases. The chain is Neuropeptide S receptor (NPSR1) from Macaca mulatta (Rhesus macaque).